The primary structure comprises 434 residues: MKFLHTVAQTATLLLSLGASVEGFNRARNDACKPHHPFRPLPASTPRTKTCHVRSHGDGTDDAAFVLSALRKCNNGGKVVFDADKEYTIGTALDMTFLRHVDLEILGRIQFTNDTDYWQAHAFRHGFQNATTFFQLGGTDVNVYGSGTLDGNGQVWYDLYAAEPLTLRPILLGVIGLHGGTIGPLKLRYSPQWYQLVANSTDVLFDGIDISGYSSSKNTAKNTDGWDTYRSSNIVIQNSVVNNGDDCVSFKPNSTDILVQNMHCNGSHGISVGSLGQYKGEIDIVKNILVYNISMYNASDMARIKVWPGVDSALSEDLQGGGGSGAVSNITYDRMYIENVDWAIEVTQCYGQKNQTLCNQYPSNLTISDVHIKNMWGTTSGKRDPNVGTIVCSSPDVCSDIYVTNVNVTSPSGTDDYICTNVDESLLDVNCSSG.

Residues 1 to 23 form the signal peptide; that stretch reads MKFLHTVAQTATLLLSLGASVEG. Residues 35 to 54 form a disordered region; that stretch reads HHPFRPLPASTPRTKTCHVR. Residues Asn-113, Asn-129, and Asn-199 are each glycosylated (N-linked (GlcNAc...) asparagine). Residues 231 to 252 form a PbH1 1 repeat; that stretch reads SSNIVIQNSVVNNGDDCVSFKP. The active-site Proton donor is Asp-245. Cys-247 and Cys-264 form a disulfide bridge. Asn-253 and Asn-265 each carry an N-linked (GlcNAc...) asparagine glycan. The PbH1 2 repeat unit spans residues 254-274; it reads STDILVQNMHCNGSHGISVGS. His-268 is a catalytic residue. N-linked (GlcNAc...) asparagine glycosylation is found at Asn-292, Asn-297, Asn-329, Asn-354, and Asn-364. The stretch at 327 to 348 is one PbH1 3 repeat; that stretch reads VSNITYDRMYIENVDWAIEVTQ. A PbH1 4 repeat occupies 362 to 394; sequence PSNLTISDVHIKNMWGTTSGKRDPNVGTIVCSS. Cys-392 and Cys-398 form a disulfide bridge. N-linked (GlcNAc...) asparagine glycosylation is found at Asn-407 and Asn-430.

It belongs to the glycosyl hydrolase 28 family.

Its subcellular location is the secreted. It catalyses the reaction [(1-&gt;4)-alpha-D-galacturonosyl](n) + H2O = alpha-D-galacturonate + [(1-&gt;4)-alpha-D-galacturonosyl](n-1). Functionally, specific in hydrolyzing the terminal glycosidic bond of polygalacturonic acid and oligogalacturonates. The sequence is that of Probable exopolygalacturonase X (pgaX) from Aspergillus terreus (strain NIH 2624 / FGSC A1156).